A 524-amino-acid chain; its full sequence is ORC1-type DNA replication protein 4 (524 aa).

Residues 1–23 (MTDKSNNPAPASDPSTTETSNDA) are compositionally biased toward polar residues. The tract at residues 1–67 (MTDKSNNPAP…DDPSDEASRG (67 aa)) is disordered. ATP is bound by residues 128 to 132 (TGKTA), Tyr325, and Arg337.

This sequence belongs to the CDC6/cdc18 family.

Involved in regulation of DNA replication. In Haloarcula marismortui (strain ATCC 43049 / DSM 3752 / JCM 8966 / VKM B-1809) (Halobacterium marismortui), this protein is ORC1-type DNA replication protein 4 (cdc6d).